The chain runs to 126 residues: Small ribosomal subunit protein bS6 (126 aa).

The segment at 107 to 126 is disordered; that stretch reads RDRERGERSERPRDDFAPAA.

It belongs to the bacterial ribosomal protein bS6 family.

Its function is as follows. Binds together with bS18 to 16S ribosomal RNA. This is Small ribosomal subunit protein bS6 from Caulobacter sp. (strain K31).